A 1528-amino-acid polypeptide reads, in one-letter code: Multidrug resistance-associated protein 1 (1528 aa).

Topologically, residues 1 to 33 are extracellular; that stretch reads MALRSFCSADGSDPLWDWNVTWHTSNPDFTKCF. Asparagine 19 carries an N-linked (GlcNAc...) asparagine glycan. Residues 34-54 form a helical membrane-spanning segment; it reads QNTVLTWVPCFYLWSCFPLYF. The Cytoplasmic portion of the chain corresponds to 55–74; the sequence is FYLSRHDRGYIQMTHLNKTK. Residues 75 to 95 form a helical membrane-spanning segment; that stretch reads TALGFFLWIICWADLFYSFWE. Residues 96–100 are Extracellular-facing; that stretch reads RSQGV. Residues 101 to 121 traverse the membrane as a helical segment; sequence LRAPVLLVSPTLLGITMLLAT. The Cytoplasmic segment spans residues 122–133; the sequence is FLIQLERRKGVQ. A helical transmembrane segment spans residues 134-154; that stretch reads SSGIMLTFWLVALLCALAILR. Residues 155–172 lie on the Extracellular side of the membrane; that stretch reads SKIISALKKDAHVDVFRD. The helical transmembrane segment at 173-193 threads the bilayer; it reads STFYLYFTLVLVQLVLSCFSD. Topologically, residues 194-317 are cytoplasmic; the sequence is CSPLFSETVH…KDREPSLFKV (124 aa). A Phosphotyrosine modification is found at tyrosine 277. At serine 290 the chain carries Phosphoserine. Residues 318 to 338 traverse the membrane as a helical segment; sequence LYKTFGPYFLMSFLYKALHDL. Positions 326 to 609 constitute an ABC transmembrane type-1 1 domain; it reads FLMSFLYKAL…LPMVISSIVQ (284 aa). The Extracellular segment spans residues 339-364; that stretch reads MMFAGPKILELIINFVNDREAPDWQG. Residues 365 to 385 form a helical membrane-spanning segment; the sequence is YFYTALLFVSACLQTLALHQY. Residues 386–441 lie on the Cytoplasmic side of the membrane; sequence FHICFVSGMRIKTAVVGAVYRKALLITNAARKSSTVGEIVNLMSVDAQRFMDLATY. Residues 442-462 traverse the membrane as a helical segment; the sequence is INMIWSAPLQVILALYFLWLS. Residues 463–465 are Extracellular-facing; that stretch reads LGP. A helical transmembrane segment spans residues 466–486; sequence SVLAGVAVMILMVPLNAVMAM. At 487–548 the chain is on the cytoplasmic side; the sequence is KTKTYQVAHM…VLKKSAYLAA (62 aa). Lysine 504 is modified (N6-succinyllysine). Residues 549 to 569 traverse the membrane as a helical segment; that stretch reads VGTFTWVCTPFLVALSTFAVF. Over 570 to 591 the chain is Extracellular; the sequence is VTVDERNILDAKKAFVSLALFN. The helical transmembrane segment at 592-612 threads the bilayer; the sequence is ILRFPLNILPMVISSIVQASV. Over 613–963 the chain is Cytoplasmic; sequence SLKRLRIFLS…VQLSVYWNYM (351 aa). Residues 644–868 form the ABC transporter 1 domain; it reads ITVKNATFTW…DGAFAEFLRT (225 aa). 678–685 is a binding site for ATP; sequence GQVGCGKS. 2 disordered regions span residues 876–895 and 909–929; these read LASEDDSVSGSGKESKPVEN and RHLSNSSSHSGDTSQQHSSIA. 4 positions are modified to phosphoserine: serine 878, serine 882, serine 912, and serine 927. Positions 910–929 are enriched in polar residues; that stretch reads HLSNSSSHSGDTSQQHSSIA. The chain crosses the membrane as a helical span at residues 964–984; it reads KAIGLFITFLSIFLFLCNHVS. Residues 971–1253 form the ABC transmembrane type-1 2 domain; that stretch reads TFLSIFLFLC…LVRMSSEMET (283 aa). Residues 985–1022 are Extracellular-facing; that stretch reads ALASNYWLSLWTDDPPVVNGTQANRNFRLSVYGALGIL. Asparagine 1003 carries N-linked (GlcNAc...) asparagine glycosylation. A helical transmembrane segment spans residues 1023–1043; the sequence is QGAAIFGYSMAVSIGGIFASR. At 1044–1086 the chain is on the cytoplasmic side; it reads RLHLDLLYNVLRSPMSFFERTPSGNLVNRFSKELDTVDSMIPQ. A helical transmembrane segment spans residues 1087–1107; that stretch reads VIKMFMGSLFSVIGAVIIILL. Residue alanine 1108 is a topological domain, extracellular. The chain crosses the membrane as a helical span at residues 1109–1129; that stretch reads TPIAAVIIPPLGLVYFFVQRF. At 1130–1200 the chain is on the cytoplasmic side; it reads YVASSRQLKR…VANRWLAVRL (71 aa). A helical membrane pass occupies residues 1201-1221; it reads ECVGNCIVLFAALFAVISRHS. The Extracellular portion of the chain corresponds to 1222 to 1223; sequence LS. Residues 1224-1244 form a helical membrane-spanning segment; that stretch reads AGLVGLSVSYSLQITAYLNWL. The Cytoplasmic portion of the chain corresponds to 1245-1528; it reads VRMSSEMETN…YSMAKDAGLV (284 aa). The ABC transporter 2 domain occupies 1290 to 1524; it reads VEFRDYCLRY…RGIFYSMAKD (235 aa). 1324 to 1331 serves as a coordination point for ATP; sequence GRTGAGKS.

It belongs to the ABC transporter superfamily. ABCC family. Conjugate transporter (TC 3.A.1.208) subfamily.

The protein localises to the cell membrane. It is found in the basolateral cell membrane. It catalyses the reaction ATP + H2O + xenobioticSide 1 = ADP + phosphate + xenobioticSide 2.. The enzyme catalyses an S-substituted glutathione(in) + ATP + H2O = an S-substituted glutathione(out) + ADP + phosphate + H(+). The catalysed reaction is leukotriene C4(in) + ATP + H2O = leukotriene C4(out) + ADP + phosphate + H(+). It carries out the reaction sphing-4-enine 1-phosphate(in) + ATP + H2O = sphing-4-enine 1-phosphate(out) + ADP + phosphate + H(+). It catalyses the reaction 17beta-estradiol 17-O-(beta-D-glucuronate)(in) + ATP + H2O = 17beta-estradiol 17-O-(beta-D-glucuronate)(out) + ADP + phosphate + H(+). The enzyme catalyses vincristine(in) + ATP + H2O = vincristine(out) + ADP + phosphate + H(+). The catalysed reaction is daunorubicin(in) + ATP + H2O = daunorubicin(out) + ADP + phosphate + H(+). It carries out the reaction 2',3'-cGAMP(in) + ATP + H2O = 2',3'-cGAMP(out) + ADP + phosphate + H(+). It catalyses the reaction S-[(2E,6E,10E)-geranylgeranyl]-L-glutathione(in) + ATP + H2O = S-[(2E,6E,10E)-geranylgeranyl]-L-glutathione(out) + ADP + phosphate + H(+). The enzyme catalyses prostaglandin A2-S-(R)-glutathione(in) + ATP + H2O = prostaglandin A2-S-(R)-glutathione(out) + ADP + phosphate + H(+). The catalysed reaction is prostaglandin A2-S-(S)-glutathione(in) + ATP + H2O = prostaglandin A2-S-(S)-glutathione(out) + ADP + phosphate + H(+). MK 571 inhibits sphingosine 1-phosphate and leukotriene C4 export. Functionally, mediates export of organic anions and drugs from the cytoplasm. Mediates ATP-dependent transport of glutathione and glutathione conjugates, leukotriene C4, estradiol-17-beta-o-glucuronide, methotrexate, antiviral drugs and other xenobiotics. Confers resistance to anticancer drugs by decreasing accumulation of drugs in cells, and by mediating ATP- and GSH-dependent drug export. Hydrolyzes ATP with low efficiency. Catalyzes the export of sphingosine 1-phosphate from mast cells independently of their degranulation. Participates in inflammatory response by allowing export of leukotriene C4 from leukotriene C4-synthesizing cells. Mediates ATP-dependent, GSH-independent cyclic GMP-AMP (cGAMP) export. Thus, by limiting intracellular cGAMP concentrations negatively regulates the cGAS-STING pathway. Exports S-geranylgeranyl-glutathione (GGG) in lymphoid cells and stromal compartments of lymphoid organs. ABCC1 (via extracellular transport) with GGT5 (via GGG catabolism) establish GGG gradients within lymphoid tissues to position P2RY8-positive lymphocytes at germinal centers in lymphoid follicles and restrict their chemotactic transmigration from blood vessels to the bone marrow parenchyma. Mediates basolateral export of GSH-conjugated R- and S-prostaglandin A2 diastereomers in polarized epithelial cells. The protein is Multidrug resistance-associated protein 1 of Mus musculus (Mouse).